A 494-amino-acid polypeptide reads, in one-letter code: UPF0371 protein spyM18_1356 (494 aa).

This sequence belongs to the UPF0371 family.

This chain is UPF0371 protein spyM18_1356, found in Streptococcus pyogenes serotype M18 (strain MGAS8232).